Reading from the N-terminus, the 20-residue chain is Chemoheterotroph-specific protein (20 aa).

This chain is Chemoheterotroph-specific protein, found in Thiomonas delicata (Thiomonas cuprina).